A 347-amino-acid chain; its full sequence is NADH-quinone oxidoreductase subunit H (347 aa).

The next 8 helical transmembrane spans lie at 13 to 33 (LLILLKSVVLIVVLLIFVAYI), 82 to 102 (GVFLLAPLVSAVLAISAWAVI), 115 to 135 (VGILYVFAISSLEVYGVIMGG), 161 to 181 (IGFVIVTVLLTAGSLNLSDIV), 198 to 218 (FLDWNWLALFPMFIIFFISAL), 248 to 268 (FLLFFLGEYVAIVLMCALATI), 283 to 303 (FTWVPGVIWFVLKVCFVFFGI), and 321 to 341 (LGWKVFLPISLFMVVATAAFL).

It belongs to the complex I subunit 1 family. NDH-1 is composed of 14 different subunits. Subunits NuoA, H, J, K, L, M, N constitute the membrane sector of the complex.

The protein resides in the cell inner membrane. It catalyses the reaction a quinone + NADH + 5 H(+)(in) = a quinol + NAD(+) + 4 H(+)(out). NDH-1 shuttles electrons from NADH, via FMN and iron-sulfur (Fe-S) centers, to quinones in the respiratory chain. The immediate electron acceptor for the enzyme in this species is believed to be ubiquinone. Couples the redox reaction to proton translocation (for every two electrons transferred, four hydrogen ions are translocated across the cytoplasmic membrane), and thus conserves the redox energy in a proton gradient. This subunit may bind ubiquinone. This Mesorhizobium japonicum (strain LMG 29417 / CECT 9101 / MAFF 303099) (Mesorhizobium loti (strain MAFF 303099)) protein is NADH-quinone oxidoreductase subunit H.